Reading from the N-terminus, the 378-residue chain is Chaperone protein DnaJ (378 aa).

The region spanning 5 to 70 (DYYQILGIPK…EKRTAYDQYG (66 aa)) is the J domain. The segment at 133-211 (GTTKEIRIPT…CRGQGRIKTN (79 aa)) adopts a CR-type zinc-finger fold. The Zn(2+) site is built by Cys-146, Cys-149, Cys-163, Cys-166, Cys-185, Cys-188, Cys-199, and Cys-202. CXXCXGXG motif repeat units lie at residues 146-153 (CKTCYGMG), 163-170 (CSTCHGKG), 185-192 (CPTCNGIG), and 199-206 (CRMCRGQG).

Belongs to the DnaJ family. In terms of assembly, homodimer. It depends on Zn(2+) as a cofactor.

Its subcellular location is the cytoplasm. Participates actively in the response to hyperosmotic and heat shock by preventing the aggregation of stress-denatured proteins and by disaggregating proteins, also in an autonomous, DnaK-independent fashion. Unfolded proteins bind initially to DnaJ; upon interaction with the DnaJ-bound protein, DnaK hydrolyzes its bound ATP, resulting in the formation of a stable complex. GrpE releases ADP from DnaK; ATP binding to DnaK triggers the release of the substrate protein, thus completing the reaction cycle. Several rounds of ATP-dependent interactions between DnaJ, DnaK and GrpE are required for fully efficient folding. Also involved, together with DnaK and GrpE, in the DNA replication of plasmids through activation of initiation proteins. The protein is Chaperone protein DnaJ of Buchnera aphidicola subsp. Schizaphis graminum (strain Sg).